The sequence spans 156 residues: 17 kDa lipoprotein (156 aa).

A signal peptide spans 1–21; the sequence is MKGSVRALCAFLGVGALGSAL. Cys22 carries the N-palmitoyl cysteine lipid modification. Cys22 is lipidated: S-diacylglycerol cysteine.

Its subcellular location is the cell membrane. The polypeptide is 17 kDa lipoprotein (tpp17) (Treponema pallidum (strain Nichols)).